The primary structure comprises 431 residues: Tyrosine--tRNA ligase (431 aa).

Y34 provides a ligand contact to L-tyrosine. The short motif at 39-48 is the 'HIGH' region element; the sequence is PTADSLHIGH. L-tyrosine contacts are provided by Y171 and Q175. The short motif at 231–235 is the 'KMSKS' region element; it reads KFGKT. An ATP-binding site is contributed by K234. Residues 353–422 form the S4 RNA-binding domain; the sequence is INVVEALVKT…GKYTILRRGK (70 aa).

Belongs to the class-I aminoacyl-tRNA synthetase family. TyrS type 1 subfamily. As to quaternary structure, homodimer.

The protein resides in the cytoplasm. The catalysed reaction is tRNA(Tyr) + L-tyrosine + ATP = L-tyrosyl-tRNA(Tyr) + AMP + diphosphate + H(+). Functionally, catalyzes the attachment of tyrosine to tRNA(Tyr) in a two-step reaction: tyrosine is first activated by ATP to form Tyr-AMP and then transferred to the acceptor end of tRNA(Tyr). The sequence is that of Tyrosine--tRNA ligase from Neisseria meningitidis serogroup C (strain 053442).